We begin with the raw amino-acid sequence, 356 residues long: Tyrosine recombinase XerS (356 aa).

Residues 16–121 (IMPWYVLDYY…ALSSLYKYLT (106 aa)) form the Core-binding (CB) domain. One can recognise a Tyr recombinase domain in the interval 169 to 354 (AFLDYVDKEY…VNDEQKNALD (186 aa)). Active-site residues include R210, K234, H306, R309, and H332. The O-(3'-phospho-DNA)-tyrosine intermediate role is filled by Y341.

This sequence belongs to the 'phage' integrase family. XerS subfamily.

Its subcellular location is the cytoplasm. FtsK is required for recombination. Site-specific tyrosine recombinase, which acts by catalyzing the cutting and rejoining of the recombining DNA molecules. Essential to convert dimers of the bacterial chromosome into monomers to permit their segregation at cell division. The protein is Tyrosine recombinase XerS of Streptococcus equi subsp. equi (strain 4047).